Here is a 578-residue protein sequence, read N- to C-terminus: GRAM domain-containing protein 4 (578 aa).

Disordered stretches follow at residues 23–58 and 136–159; these read ESPN…AGPG and TEEQ…ERRS. Phosphoserine occurs at positions 24 and 28. A compositionally biased stretch (basic and acidic residues) spans 44 to 53; that stretch reads SPRDSEELRD. The stretch at 83-143 forms a coiled coil; it reads HLEIALLEKH…ARTEEQMAQQ (61 aa). Helical transmembrane passes span 240–260, 334–354, and 356–376; these read VYMN…LAIL, ITQK…FFPY, and LVGL…DFIF. A disordered region spans residues 415–435; sequence QTTSSRSYVPSAPAGLGKEED. One can recognise a GRAM domain in the interval 445–523; it reads GNFHEIFNLT…VDITDIQKYK (79 aa).

In terms of assembly, interacts with RTN4 (isoform B). Expressed in lung and in primary lung squamous cell carcinoma (LSCC).

The protein resides in the mitochondrion membrane. The protein localises to the endoplasmic reticulum membrane. Functionally, plays a role as a mediator of E2F1-induced apoptosis in the absence of p53/TP53. Plays a role as a mediator of E2F1-induced apoptosis in the absence of p53/TP53. Inhibits TLR9 response to nucelic acids and regulates TLR9-mediated innate immune response. The polypeptide is GRAM domain-containing protein 4 (Homo sapiens (Human)).